Reading from the N-terminus, the 119-residue chain is Beta-2-microglobulin (119 aa).

A signal peptide spans 1 to 20; sequence MASSVVVALLVLLSLSGLEA. An Ig-like C1-type domain is found at 25 to 114; sequence PKIQVYSRHP…VTFSTPKTVK (90 aa). Cys-45 and Cys-100 are disulfide-bonded.

The protein belongs to the beta-2-microglobulin family. As to quaternary structure, heterodimer of an alpha chain and a beta chain. Beta-2-microglobulin is the beta-chain of major histocompatibility complex class I molecules.

The protein resides in the secreted. Functionally, component of the class I major histocompatibility complex (MHC). Involved in the presentation of peptide antigens to the immune system. The protein is Beta-2-microglobulin (B2M) of Callithrix aurita (White-eared marmoset).